Here is a 440-residue protein sequence, read N- to C-terminus: Serine protease inhibitor A3G (440 aa).

The interval 357-382 (GTEAAAATGMAGVGCCAVFDFLEIFF) is RCL.

The protein belongs to the serpin family. As to expression, expressed in bone marrow (particularly hematopoietic stem cells), heart, kidney, liver, lung, skeletal muscle, spleen, testis, thymus and T-cells.

The protein resides in the cytoplasm. The protein localises to the nucleus. Its function is as follows. Serine and cysteine protease inhibitor. Can inhibit lysosomal papain-like proteases including the cathepsins B, G, H, K, L and V. Ineffective against elastase, granzyme A, granzyme B, or caspases 3, 8 or 9. Inhibition of cytoplasmic cathepsin B following release from the lysosome may protect cells from apoptosis. This may facilitate the survival of progenitor T-cells and the subsequent development of long term memory CD8 T-cells. The sequence is that of Serine protease inhibitor A3G (Serpina3g) from Mus musculus (Mouse).